Consider the following 610-residue polypeptide: Probable methyltransferase PMT22 (610 aa).

Residues 1–10 (MIKNIFQSRK) lie on the Cytoplasmic side of the membrane. Residues 11 to 31 (LSGLCVLSILLVSVTILLLTN) form a helical; Signal-anchor for type II membrane protein membrane-spanning segment. The Lumenal segment spans residues 32–610 (DTIDLFPYLS…LVGLKSSWRP (579 aa)). The span at 56 to 69 (STPISSPTNDSSPP) shows a compositional bias: low complexity. The interval 56 to 81 (STPISSPTNDSSPPLESPVNQTRVDD) is disordered. N-linked (GlcNAc...) asparagine glycosylation is found at N64, N75, N100, N400, N469, and N546.

The protein belongs to the methyltransferase superfamily.

It localises to the endoplasmic reticulum membrane. This Arabidopsis thaliana (Mouse-ear cress) protein is Probable methyltransferase PMT22.